The chain runs to 669 residues: Alpha-1,4-glucan:maltose-1-phosphate maltosyltransferase 2 (669 aa).

Alpha-maltose 1-phosphate contacts are provided by lysine 255, glutamine 315, and aspartate 350. The active-site Nucleophile is the aspartate 385. An alpha-maltose 1-phosphate-binding site is contributed by asparagine 386. Glutamate 414 (proton donor) is an active-site residue. 525–526 (KY) is a binding site for alpha-maltose 1-phosphate.

This sequence belongs to the glycosyl hydrolase 13 family. GlgE subfamily. As to quaternary structure, homodimer.

The catalysed reaction is alpha-maltose 1-phosphate + [(1-&gt;4)-alpha-D-glucosyl](n) = [(1-&gt;4)-alpha-D-glucosyl](n+2) + phosphate. Maltosyltransferase that uses maltose 1-phosphate (M1P) as the sugar donor to elongate linear or branched alpha-(1-&gt;4)-glucans. Maltooligosaccharides with a degree of polymerization (DP) superior or equal to 4 are efficient acceptors, with DP6 being optimal in the GlgE-catalyzed polymerization with M1P. Is probably involved in a branched alpha-glucan biosynthetic pathway from trehalose, together with TreS, Mak and GlgB. The sequence is that of Alpha-1,4-glucan:maltose-1-phosphate maltosyltransferase 2 (glgE2) from Streptomyces coelicolor (strain ATCC BAA-471 / A3(2) / M145).